A 304-amino-acid chain; its full sequence is Beta-lactamase-like protein str6 (304 aa).

This sequence belongs to the beta-lactamase family.

The protein operates within mycotoxin biosynthesis. In terms of biological role, beta-lactamase-like protein; part of the gene cluster that mediates the biosynthesis of strobilurin A, an antifungal polyketide that contains a key beta-methoxyacrylate toxophore that targets the complex III of the mitochondrial electron transport chain. Strobilurin biosynthesis begins with construction of benzoyl CoA by step-wise elimination of ammonia from phenylalanine by the phenylalanine ammonia-lyase str11, oxygenation by str8 and retro-Claisen reaction to form benzoic acid, which is activated to its CoA thiolester benzoyl CoA by the dedicated CoA ligase str10. Benzoyl CoA forms the starter unit for the highly reducing polyketide synthase stpks1 that produces the polyketide prestrobilutin A. The FAD-dependent oxygenase str9 then catalyzes the key oxidative rearrangement responsible for the creation of the beta-methoxyacrylate toxophore. Str9 performs epoxidation of the 2,3 olefin of prestrobilutin A, followed by Meinwald rearrangement to furnish the aldehyde intermediate. Rapid enolization of the aldehyde intermediate would give the beta-methoxyacrylate skeleton and methylations catalyzed by str2 and str3 complete the synthesis and lead to the production of strobilurin A. The short-chain dehydrogenase stl2 and the dehydrogenase str4 play a role in the shunt pathway leading to the production of bolineol. The cluster encodes no obvious halogenase gene that could be involved in production of strobilurin B, nor any obvious dimethylallyl-transferase that could be involved in the production of strobilurin G. It is possible that unknown proteins encoded in, or near, the cluster (such as str1 or stl1) may form new classes of halogenases or dimethylally-transferases, or that the responsible genes are located elsewhere on the genome. Similarly, proteins encoded by str5/str6 hydrolases appear to have no chemical role in the biosynthesis of strobilurin A. Finally, no obvious self-resistance gene is found within the cluster. This Strobilurus tenacellus protein is Beta-lactamase-like protein str6.